An 86-amino-acid chain; its full sequence is UPF0335 protein BruAb1_1737 (86 aa).

Belongs to the UPF0335 family.

In Brucella abortus biovar 1 (strain 9-941), this protein is UPF0335 protein BruAb1_1737.